The primary structure comprises 294 residues: Cyclin-G1 (294 aa).

Belongs to the cyclin family. Cyclin G subfamily. As to quaternary structure, binds to B' regulatory B subunits of protein phosphatase A (PP2A) following induction by p53 (in vitro). As to expression, highest levels in kidney, heart and skeletal muscle.

It is found in the nucleus. Functionally, may play a role in growth regulation. Is associated with G2/M phase arrest in response to DNA damage. May be an intermediate by which p53 mediates its role as an inhibitor of cellular proliferation. In Mus musculus (Mouse), this protein is Cyclin-G1 (Ccng1).